Here is a 562-residue protein sequence, read N- to C-terminus: Putative transport protein YPA_0617 (562 aa).

6 helical membrane-spanning segments follow: residues 8–28 (LLNG…LCLG), 37–57 (LGNA…HFAI), 66–86 (FMLF…SIFF), 94–114 (MLAL…GKLF), 118–138 (IGLT…LVGA), and 158–178 (NLSL…ILGA). RCK C-terminal domains lie at 202-288 (LDTD…SFRN) and 290-373 (KEVF…KIGF). 5 consecutive transmembrane segments (helical) span residues 383–403 (LLAF…TFQF), 406–426 (FSFG…LGFL), 447–467 (FGLM…INSS), 475–495 (MLIS…VFGA), and 541–561 (IANV…PGIL).

The protein belongs to the AAE transporter (TC 2.A.81) family. YbjL subfamily.

The protein resides in the cell membrane. This Yersinia pestis bv. Antiqua (strain Antiqua) protein is Putative transport protein YPA_0617.